A 214-amino-acid polypeptide reads, in one-letter code: Large ribosomal subunit protein uL16 (214 aa).

At Arg32 the chain carries Citrulline. Lys175 participates in a covalent cross-link: Glycyl lysine isopeptide (Lys-Gly) (interchain with G-Cter in SUMO2). A Glycyl lysine isopeptide (Lys-Gly) (interchain with G-Cter in ubiquitin) cross-link involves residue Lys188.

It belongs to the universal ribosomal protein uL16 family. As to quaternary structure, component of the large ribosomal subunit. Mature ribosomes consist of a small (40S) and a large (60S) subunit. The 40S subunit contains about 33 different proteins and 1 molecule of RNA (18S). The 60S subunit contains about 49 different proteins and 3 molecules of RNA (28S, 5.8S and 5S). Citrullinated by PADI4. Post-translationally, ufmylated by UFL1.

The protein resides in the cytoplasm. Its function is as follows. Component of the large ribosomal subunit. Plays a role in the formation of actively translating ribosomes. May play a role in the embryonic brain development. The sequence is that of Large ribosomal subunit protein uL16 from Bos taurus (Bovine).